Reading from the N-terminus, the 180-residue chain is Ribosome-recycling factor (180 aa).

It belongs to the RRF family.

It is found in the cytoplasm. Its function is as follows. Responsible for the release of ribosomes from messenger RNA at the termination of protein biosynthesis. May increase the efficiency of translation by recycling ribosomes from one round of translation to another. This chain is Ribosome-recycling factor, found in Chlamydia felis (strain Fe/C-56) (Chlamydophila felis).